A 240-amino-acid chain; its full sequence is UDP-2,3-diacylglucosamine hydrolase (240 aa).

Mn(2+)-binding residues include Asp-8, His-10, Asp-41, Asn-79, and His-114. 79 to 80 (NR) is a substrate binding site. Residues Asp-122, Ser-160, Asn-164, Lys-167, and His-195 each coordinate substrate. Mn(2+) is bound by residues His-195 and His-197.

The protein belongs to the LpxH family. The cofactor is Mn(2+).

It localises to the cell inner membrane. It catalyses the reaction UDP-2-N,3-O-bis[(3R)-3-hydroxytetradecanoyl]-alpha-D-glucosamine + H2O = 2-N,3-O-bis[(3R)-3-hydroxytetradecanoyl]-alpha-D-glucosaminyl 1-phosphate + UMP + 2 H(+). Its pathway is glycolipid biosynthesis; lipid IV(A) biosynthesis; lipid IV(A) from (3R)-3-hydroxytetradecanoyl-[acyl-carrier-protein] and UDP-N-acetyl-alpha-D-glucosamine: step 4/6. Its function is as follows. Hydrolyzes the pyrophosphate bond of UDP-2,3-diacylglucosamine to yield 2,3-diacylglucosamine 1-phosphate (lipid X) and UMP by catalyzing the attack of water at the alpha-P atom. Involved in the biosynthesis of lipid A, a phosphorylated glycolipid that anchors the lipopolysaccharide to the outer membrane of the cell. This Salmonella dublin (strain CT_02021853) protein is UDP-2,3-diacylglucosamine hydrolase.